The primary structure comprises 609 residues: Wee1-like protein kinase (609 aa).

The span at 1–10 (MAFRQSEHEM) shows a compositional bias: basic and acidic residues. 2 disordered regions span residues 1–88 (MAFR…SMSP) and 147–166 (PLHN…PFTP). A phosphoserine mark is found at Ser23, Ser25, and Ser27. Positions 37–48 (RFADDDFDKDTP) are enriched in basic and acidic residues. Residue Thr47 is modified to Phosphothreonine. Ser52 carries the post-translational modification Phosphoserine. Over residues 153–165 (LPTQDTANVNPFT) the composition is skewed to polar residues. Thr165 carries the phosphothreonine modification. Ser168 carries the post-translational modification Phosphoserine. The Protein kinase domain occupies 239–517 (FMQVNVIGVG…SQSIFSHPIL (279 aa)). Residues 245–253 (IGVGEFGVV) and Lys268 each bind ATP. Asp361 functions as the Proton acceptor in the catalytic mechanism. Residues Asn366 and Asp412 each contribute to the Mg(2+) site.

It belongs to the protein kinase superfamily. Ser/Thr protein kinase family. WEE1 subfamily. Requires Mg(2+) as cofactor. Phosphorylated during M and G1 phases. Expressed in embryos; expression remains high in the proliferating cells of the central nervous system well after cells in the rest of the embryo have ceased dividing.

It localises to the nucleus. It carries out the reaction L-tyrosyl-[protein] + ATP = O-phospho-L-tyrosyl-[protein] + ADP + H(+). With respect to regulation, negatively regulated by phosphorylation in the M-phase. Functionally, acts as a negative regulator of entry into mitosis (G2 to M transition). This kinase specifically phosphorylates and inactivates cyclin B1-complexed CDC2. This chain is Wee1-like protein kinase, found in Drosophila melanogaster (Fruit fly).